The sequence spans 248 residues: tRNA pseudouridine synthase A (248 aa).

The active-site Nucleophile is D53. Y111 provides a ligand contact to substrate.

It belongs to the tRNA pseudouridine synthase TruA family. In terms of assembly, homodimer.

It carries out the reaction uridine(38/39/40) in tRNA = pseudouridine(38/39/40) in tRNA. Its function is as follows. Formation of pseudouridine at positions 38, 39 and 40 in the anticodon stem and loop of transfer RNAs. The polypeptide is tRNA pseudouridine synthase A (Streptococcus thermophilus (strain ATCC BAA-491 / LMD-9)).